We begin with the raw amino-acid sequence, 358 residues long: Na(+)/H(+) exchange regulatory cofactor NHE-RF1 (358 aa).

Serine 2 is modified (N-acetylserine). A phosphoserine mark is found at serine 2 and serine 46. Residues 14–94 (LCCLEKGPNG…AVRLLVVDPE (81 aa)) enclose the PDZ 1 domain. Over residues 114 to 134 (QETPGQAEPAAAAEAQGAGNE) the composition is skewed to low complexity. 2 disordered regions span residues 114–192 (QETP…EASG) and 269–358 (SREA…FSNL). Positions 135 to 149 (NEPREADKSHPEQRK) are enriched in basic and acidic residues. The region spanning 154 to 234 (LCTMKKGPSG…ETKLLVVDRE (81 aa)) is the PDZ 2 domain. Phosphoserine is present on residues serine 162, serine 269, serine 280, serine 290, and serine 291. Over residues 287–306 (RSASSDTSEELNSQDSPPKQ) the composition is skewed to polar residues. Threonine 293 is modified (phosphothreonine). Residues serine 294, serine 299, and serine 302 each carry the phosphoserine modification. Low complexity predominate over residues 307–319 (DSTAPSSTSSSDP). Residues 348-358 (WSKKNELFSNL) are compositionally biased toward basic and acidic residues.

In terms of assembly, homodimer, and heterodimer with NHERF2. Binds the N-termini of EZR, RDX and MSN. Binds the C-termini of PDGFRA, PDGFRB, ADRB2, NOS2 and CFTR. Binds ARHGAP17, EPI64, RACK1, OPRK1, GNAQ, CTNNB1 and PLCB3. Binds PDZK1. Interacts with CLCN3. Binds the C-terminus of PAG1. In resting T-cells, part of a PAG1-NHERF1-MSN complex which is disrupted upon TCR activation. Forms a complex with CFTR and SLC4A7. Forms a complex with SLC4A7 and ATP6V1B1. Interacts with TRPC4 (via the PDZ-binding domain). Directly interacts with HTR4. Interacts (via the PDZ 1 domain) with PODXL (via the C-terminal PDZ-binding motif DTHL); interaction is not detected in glomerular epithelium cells. Interacts (via the PDZ 1 domain) with PODXL (via the C-terminal PDZ-binding motif DTHL); the interaction take place early in the secretory pathway and is necessary for its apical membrane sorting. Interacts with SLC26A3. Interacts with MCC. Interacts with SLC34A1. Interacts (via the PDZ domains) with SLC26A6 isoform 4 and isoform 5. Interacts (via PDZ domains) with ACE2 (via PDZ-binding motif); the interaction may enhance ACE2 membrane residence. In terms of processing, phosphorylated on serine residues.

The protein localises to the cytoplasm. It is found in the apical cell membrane. The protein resides in the endomembrane system. It localises to the cell projection. Its subcellular location is the filopodium. The protein localises to the ruffle. It is found in the microvillus. Functionally, scaffold protein that connects plasma membrane proteins with members of the ezrin/moesin/radixin family and thereby helps to link them to the actin cytoskeleton and to regulate their surface expression. Necessary for recycling of internalized ADRB2. Was first known to play a role in the regulation of the activity and subcellular location of SLC9A3. Necessary for cAMP-mediated phosphorylation and inhibition of SLC9A3. Involved in sperm capacitation. May participate in the regulation of the chloride and bicarbonate homeostasis in spermatozoa. May enhance Wnt signaling. May participate in HTR4 targeting to microvilli. Involved in the regulation of phosphate reabsorption in the renal proximal tubules. The protein is Na(+)/H(+) exchange regulatory cofactor NHE-RF1 (NHERF1) of Macaca fascicularis (Crab-eating macaque).